The primary structure comprises 150 residues: D-aminoacyl-tRNA deacylase (150 aa).

The short motif at 138–139 is the Gly-cisPro motif, important for rejection of L-amino acids element; it reads GP.

Belongs to the DTD family. As to quaternary structure, homodimer.

The protein localises to the cytoplasm. It catalyses the reaction glycyl-tRNA(Ala) + H2O = tRNA(Ala) + glycine + H(+). The catalysed reaction is a D-aminoacyl-tRNA + H2O = a tRNA + a D-alpha-amino acid + H(+). In terms of biological role, an aminoacyl-tRNA editing enzyme that deacylates mischarged D-aminoacyl-tRNAs. Also deacylates mischarged glycyl-tRNA(Ala), protecting cells against glycine mischarging by AlaRS. Acts via tRNA-based rather than protein-based catalysis; rejects L-amino acids rather than detecting D-amino acids in the active site. By recycling D-aminoacyl-tRNA to D-amino acids and free tRNA molecules, this enzyme counteracts the toxicity associated with the formation of D-aminoacyl-tRNA entities in vivo and helps enforce protein L-homochirality. The protein is D-aminoacyl-tRNA deacylase of Sorangium cellulosum (strain So ce56) (Polyangium cellulosum (strain So ce56)).